We begin with the raw amino-acid sequence, 367 residues long: Quinolinate synthase (367 aa).

Iminosuccinate contacts are provided by histidine 45 and serine 62. A [4Fe-4S] cluster-binding site is contributed by cysteine 109. Iminosuccinate contacts are provided by residues 140-142 and serine 161; that span reads YVN. Cysteine 229 lines the [4Fe-4S] cluster pocket. Residues 255–257 and threonine 272 contribute to the iminosuccinate site; that span reads HPE. Position 319 (cysteine 319) interacts with [4Fe-4S] cluster.

It belongs to the quinolinate synthase family. Type 3 subfamily. [4Fe-4S] cluster serves as cofactor.

It is found in the cytoplasm. It catalyses the reaction iminosuccinate + dihydroxyacetone phosphate = quinolinate + phosphate + 2 H2O + H(+). Its pathway is cofactor biosynthesis; NAD(+) biosynthesis; quinolinate from iminoaspartate: step 1/1. Catalyzes the condensation of iminoaspartate with dihydroxyacetone phosphate to form quinolinate. The sequence is that of Quinolinate synthase from Anoxybacillus flavithermus (strain DSM 21510 / WK1).